The chain runs to 335 residues: Glycerol-3-phosphate dehydrogenase [NAD(P)+] (335 aa).

NADPH contacts are provided by Ser10, Phe11, Arg31, and Lys105. Residues Lys105, Gly136, and Ser138 each contribute to the sn-glycerol 3-phosphate site. Position 140 (Ala140) interacts with NADPH. Sn-glycerol 3-phosphate-binding residues include Lys191, Asp244, Ser254, Arg255, and Asn256. Residue Lys191 is the Proton acceptor of the active site. NADPH is bound at residue Arg255. 2 residues coordinate NADPH: Val279 and Glu281.

Belongs to the NAD-dependent glycerol-3-phosphate dehydrogenase family.

The protein resides in the cytoplasm. The enzyme catalyses sn-glycerol 3-phosphate + NAD(+) = dihydroxyacetone phosphate + NADH + H(+). It carries out the reaction sn-glycerol 3-phosphate + NADP(+) = dihydroxyacetone phosphate + NADPH + H(+). It participates in membrane lipid metabolism; glycerophospholipid metabolism. Its function is as follows. Catalyzes the reduction of the glycolytic intermediate dihydroxyacetone phosphate (DHAP) to sn-glycerol 3-phosphate (G3P), the key precursor for phospholipid synthesis. The chain is Glycerol-3-phosphate dehydrogenase [NAD(P)+] from Leptospira borgpetersenii serovar Hardjo-bovis (strain JB197).